The primary structure comprises 343 residues: Ribosomal RNA small subunit methyltransferase C (343 aa).

The protein belongs to the methyltransferase superfamily. RsmC family. In terms of assembly, monomer.

Its subcellular location is the cytoplasm. The enzyme catalyses guanosine(1207) in 16S rRNA + S-adenosyl-L-methionine = N(2)-methylguanosine(1207) in 16S rRNA + S-adenosyl-L-homocysteine + H(+). In terms of biological role, specifically methylates the guanine in position 1207 of 16S rRNA in the 30S particle. The chain is Ribosomal RNA small subunit methyltransferase C from Escherichia coli (strain SMS-3-5 / SECEC).